The primary structure comprises 549 residues: Chaperonin GroEL (549 aa).

ATP contacts are provided by residues threonine 30–proline 33, lysine 51, aspartate 87–threonine 91, glycine 415, asparagine 479–alanine 481, and aspartate 495.

This sequence belongs to the chaperonin (HSP60) family. In terms of assembly, forms a cylinder of 14 subunits composed of two heptameric rings stacked back-to-back. Interacts with the co-chaperonin GroES.

Its subcellular location is the cytoplasm. The catalysed reaction is ATP + H2O + a folded polypeptide = ADP + phosphate + an unfolded polypeptide.. Functionally, together with its co-chaperonin GroES, plays an essential role in assisting protein folding. The GroEL-GroES system forms a nano-cage that allows encapsulation of the non-native substrate proteins and provides a physical environment optimized to promote and accelerate protein folding. The protein is Chaperonin GroEL of Stenotrophomonas maltophilia (strain R551-3).